Consider the following 412-residue polypeptide: MSLQNFDPAIARLIDRERNRQETHLELIASENYVSEEVLQAQGSLLTNKYAEGYPGRRYYGGCKVVDEIENLAIERARKLFGCEYVNVQPHSGSQANQAVFLAVLEPGDRILGMSLAHGGHLTHGASVNFSGKFFQAFTYGLEKDSETLDYDQMEDLAREHRPKMIIAGASAYSRVIDFPRFRKICDEIGAYLMVDMAHYAGLIAAGVYPSPVGIADFITSTTHKTLRGPRGGLILAKAEYAAVLDKTIFPVYQGGPLMHVIAAKAVAFNEALGDEFKHYQQRVINNARTMADVLTRRGLRVVSGGTDCHMFLLDLRAMNITGKDAEALLESAHITLNKNAIPDDPQKPAITSGIRIGTPALTTRGFGEAECAEVANLIADLLEQPDNTARVENIRRRVMHLCECFPVYLLT.

(6S)-5,6,7,8-tetrahydrofolate-binding positions include Leu-116 and 120–122 (GHL). An N6-(pyridoxal phosphate)lysine modification is found at Lys-225.

Belongs to the SHMT family. Homodimer. Requires pyridoxal 5'-phosphate as cofactor.

The protein localises to the cytoplasm. It catalyses the reaction (6R)-5,10-methylene-5,6,7,8-tetrahydrofolate + glycine + H2O = (6S)-5,6,7,8-tetrahydrofolate + L-serine. Its pathway is one-carbon metabolism; tetrahydrofolate interconversion. It functions in the pathway amino-acid biosynthesis; glycine biosynthesis; glycine from L-serine: step 1/1. Its function is as follows. Catalyzes the reversible interconversion of serine and glycine with tetrahydrofolate (THF) serving as the one-carbon carrier. This reaction serves as the major source of one-carbon groups required for the biosynthesis of purines, thymidylate, methionine, and other important biomolecules. Also exhibits THF-independent aldolase activity toward beta-hydroxyamino acids, producing glycine and aldehydes, via a retro-aldol mechanism. The chain is Serine hydroxymethyltransferase 1 from Pseudomonas fluorescens (strain Pf0-1).